The chain runs to 351 residues: MKKSTLALMMMGFVASTATQAAEVYNKNANKLDVYGKIKAMHYFSDYDSKDGDQTYVRFGIKGETQINEDLTGYGRWESEFSGNKTESDSSQQKTRLAFAGVKLKNYGSFDYGRNLGALYDVEAWTDMFPEFGGDSSAQTDNFMTKRASGLATYRNTDFFGLVDGLDLTLQYQGKNEGREAKKQNGDGVGTSLSYDFGGTDFAVSAAYTSSDRTNDQNLLARAQGSKAEAWATGLKYDANNIYLATMYSETRKMTPISGGFANKAQNFEAVAQYQFDFGLRPSLGYVLSKGKDIEGVGSEDLVNYIDVGLTYYFNKNMNAFVDYKINQLKSDNKLGINDDDIVALGMTYQF.

An N-terminal signal peptide occupies residues 1-21 (MKKSTLALMMMGFVASTATQA).

It belongs to the Gram-negative porin family. In terms of assembly, homotrimer.

It localises to the cell outer membrane. In terms of biological role, uptake of inorganic phosphate, phosphorylated compounds, and some other negatively charged solutes. This is Outer membrane porin PhoE (phoE) from Klebsiella pneumoniae.